The chain runs to 449 residues: Trigger factor (449 aa).

The PPIase FKBP-type domain maps to 162–247 (GDTVTIDYTG…IHEVKSKELP (86 aa)). Over residues 427–438 (AKKATKKSTAKK) the composition is skewed to basic residues. Positions 427-449 (AKKATKKSTAKKSTKEDEKKADK) are disordered. The segment covering 439–449 (STKEDEKKADK) has biased composition (basic and acidic residues).

The protein belongs to the FKBP-type PPIase family. Tig subfamily.

It is found in the cytoplasm. The catalysed reaction is [protein]-peptidylproline (omega=180) = [protein]-peptidylproline (omega=0). In terms of biological role, involved in protein export. Acts as a chaperone by maintaining the newly synthesized protein in an open conformation. Functions as a peptidyl-prolyl cis-trans isomerase. This chain is Trigger factor, found in Lactobacillus gasseri (strain ATCC 33323 / DSM 20243 / BCRC 14619 / CIP 102991 / JCM 1131 / KCTC 3163 / NCIMB 11718 / NCTC 13722 / AM63).